Here is a 365-residue protein sequence, read N- to C-terminus: Succinyl-diaminopimelate desuccinylase (365 aa).

H64 serves as a coordination point for Zn(2+). D66 is an active-site residue. D95 is a Zn(2+) binding site. E125 functions as the Proton acceptor in the catalytic mechanism. Zn(2+) is bound by residues E126, E154, and H339.

Belongs to the peptidase M20A family. DapE subfamily. Homodimer. It depends on Zn(2+) as a cofactor. Co(2+) is required as a cofactor.

The catalysed reaction is N-succinyl-(2S,6S)-2,6-diaminopimelate + H2O = (2S,6S)-2,6-diaminopimelate + succinate. The protein operates within amino-acid biosynthesis; L-lysine biosynthesis via DAP pathway; LL-2,6-diaminopimelate from (S)-tetrahydrodipicolinate (succinylase route): step 3/3. Functionally, catalyzes the hydrolysis of N-succinyl-L,L-diaminopimelic acid (SDAP), forming succinate and LL-2,6-diaminopimelate (DAP), an intermediate involved in the bacterial biosynthesis of lysine and meso-diaminopimelic acid, an essential component of bacterial cell walls. The chain is Succinyl-diaminopimelate desuccinylase from Campylobacter curvus (strain 525.92).